The primary structure comprises 615 residues: Crinkler effector protein 15 (615 aa).

Residues 1-17 (MVKLVCAIVGVAGSAFP) form the signal peptide. The segment at 18–54 (VDIDASQLVGDLKKAIKAENAMTFTGDAKDLQLFLAK) is LQLFLAK domain. Positions 55 to 136 (QPVDDESGKE…NMELPSSEQI (82 aa)) are DWL domain. The short motif at 137–143 (HVLVVVP) is the HVLVXXP motif element. N531 carries an N-linked (GlcNAc...) asparagine glycan.

It belongs to the Crinkler effector family.

The protein localises to the secreted. It localises to the host nucleus. Secreted effector that elicits necrosis in host plants, a characteristic of plant innate immunity. The chain is Crinkler effector protein 15 from Phytophthora infestans (Potato late blight agent).